Consider the following 979-residue polypeptide: DNA ligase 4 (979 aa).

Residues 1–39 are disordered; the sequence is MDSDEIMPDEEHPNVPVGDEESDIDEKYPNRPRNHSPTL. Positions 320, 322, 323, 327, 389, 430, 490, 495, 512, and 514 each coordinate ATP. Lys322 serves as the catalytic N6-AMP-lysine intermediate. Glu389 contributes to the Mg(2+) binding site. Glu490 lines the Mg(2+) pocket. BRCT domains lie at 721–814 and 867–965; these read PSGH…PDFL and LQES…RFQP.

It belongs to the ATP-dependent DNA ligase family. Mg(2+) is required as a cofactor.

The protein resides in the nucleus. It catalyses the reaction ATP + (deoxyribonucleotide)n-3'-hydroxyl + 5'-phospho-(deoxyribonucleotide)m = (deoxyribonucleotide)n+m + AMP + diphosphate.. DNA ligase involved in DNA non-homologous end joining (NHEJ); required for double-strand break (DSB) repair. The chain is DNA ligase 4 (lig4) from Aspergillus fumigatus (strain ATCC MYA-4609 / CBS 101355 / FGSC A1100 / Af293) (Neosartorya fumigata).